Here is a 298-residue protein sequence, read N- to C-terminus: 4-hydroxy-tetrahydrodipicolinate synthase (298 aa).

Threonine 48 lines the pyruvate pocket. The Proton donor/acceptor role is filled by tyrosine 137. The active-site Schiff-base intermediate with substrate is the lysine 166. A pyruvate-binding site is contributed by isoleucine 207.

This sequence belongs to the DapA family. Homotetramer; dimer of dimers.

It is found in the cytoplasm. It carries out the reaction L-aspartate 4-semialdehyde + pyruvate = (2S,4S)-4-hydroxy-2,3,4,5-tetrahydrodipicolinate + H2O + H(+). The protein operates within amino-acid biosynthesis; L-lysine biosynthesis via DAP pathway; (S)-tetrahydrodipicolinate from L-aspartate: step 3/4. Catalyzes the condensation of (S)-aspartate-beta-semialdehyde [(S)-ASA] and pyruvate to 4-hydroxy-tetrahydrodipicolinate (HTPA). This is 4-hydroxy-tetrahydrodipicolinate synthase from Campylobacter hominis (strain ATCC BAA-381 / DSM 21671 / CCUG 45161 / LMG 19568 / NCTC 13146 / CH001A).